The following is a 211-amino-acid chain: ATP phosphoribosyltransferase (211 aa).

The protein belongs to the ATP phosphoribosyltransferase family. Short subfamily. Heteromultimer composed of HisG and HisZ subunits.

The protein resides in the cytoplasm. The enzyme catalyses 1-(5-phospho-beta-D-ribosyl)-ATP + diphosphate = 5-phospho-alpha-D-ribose 1-diphosphate + ATP. The protein operates within amino-acid biosynthesis; L-histidine biosynthesis; L-histidine from 5-phospho-alpha-D-ribose 1-diphosphate: step 1/9. Catalyzes the condensation of ATP and 5-phosphoribose 1-diphosphate to form N'-(5'-phosphoribosyl)-ATP (PR-ATP). Has a crucial role in the pathway because the rate of histidine biosynthesis seems to be controlled primarily by regulation of HisG enzymatic activity. The protein is ATP phosphoribosyltransferase of Bacillus cereus (strain ATCC 14579 / DSM 31 / CCUG 7414 / JCM 2152 / NBRC 15305 / NCIMB 9373 / NCTC 2599 / NRRL B-3711).